A 160-amino-acid polypeptide reads, in one-letter code: Na(+)/H(+) antiporter subunit E1 (160 aa).

4 helical membrane passes run 1–21 (MAIQ…VTGS), 27–47 (FILG…VLPG), 49–69 (FYLI…IELI), and 101–121 (WQIV…VLGI).

This sequence belongs to the CPA3 antiporters (TC 2.A.63) subunit E family. May form a heterooligomeric complex that consists of seven subunits: mnhA1, mnhB1, mnhC1, mnhD1, mnhE1, mnhF1 and mnhG1.

It localises to the cell membrane. Functionally, mnh complex is a Na(+)/H(+) antiporter involved in Na(+) excretion. The protein is Na(+)/H(+) antiporter subunit E1 (mnhE1) of Staphylococcus saprophyticus subsp. saprophyticus (strain ATCC 15305 / DSM 20229 / NCIMB 8711 / NCTC 7292 / S-41).